The following is a 130-amino-acid chain: Small ribosomal subunit protein uS8 (130 aa).

The protein belongs to the universal ribosomal protein uS8 family. Part of the 30S ribosomal subunit.

In terms of biological role, one of the primary rRNA binding proteins, it binds directly to 16S rRNA central domain where it helps coordinate assembly of the platform of the 30S subunit. This chain is Small ribosomal subunit protein uS8, found in Methanotorris igneus (Methanococcus igneus).